The chain runs to 602 residues: Elongation factor 4 (602 aa).

In terms of domain architecture, tr-type G spans 7–189 (SKIRNFCIIA…AVVSRIPHPQ (183 aa)). GTP is bound by residues 19-24 (DHGKST) and 136-139 (NKVD).

Belongs to the TRAFAC class translation factor GTPase superfamily. Classic translation factor GTPase family. LepA subfamily.

The protein localises to the cell inner membrane. It catalyses the reaction GTP + H2O = GDP + phosphate + H(+). Its function is as follows. Required for accurate and efficient protein synthesis under certain stress conditions. May act as a fidelity factor of the translation reaction, by catalyzing a one-codon backward translocation of tRNAs on improperly translocated ribosomes. Back-translocation proceeds from a post-translocation (POST) complex to a pre-translocation (PRE) complex, thus giving elongation factor G a second chance to translocate the tRNAs correctly. Binds to ribosomes in a GTP-dependent manner. This Prochlorococcus marinus subsp. pastoris (strain CCMP1986 / NIES-2087 / MED4) protein is Elongation factor 4.